The primary structure comprises 122 residues: Large ribosomal subunit protein uL14 (122 aa).

This sequence belongs to the universal ribosomal protein uL14 family. In terms of assembly, part of the 50S ribosomal subunit. Forms a cluster with proteins L3 and L19. In the 70S ribosome, L14 and L19 interact and together make contacts with the 16S rRNA in bridges B5 and B8.

Binds to 23S rRNA. Forms part of two intersubunit bridges in the 70S ribosome. The chain is Large ribosomal subunit protein uL14 from Neisseria gonorrhoeae (strain ATCC 700825 / FA 1090).